Reading from the N-terminus, the 127-residue chain is Protein translocase subunit SecE (127 aa).

The Cytoplasmic portion of the chain corresponds to 1–19 (MSANTEAQGSGRGLEAMKW). The chain crosses the membrane as a helical span at residues 20 to 32 (VVVVALLLVAIVG). Residues 33-48 (NYLYRDIMLPLRALAV) are Periplasmic-facing. Residues 49-60 (VILIAAAGGVAL) traverse the membrane as a helical segment. Over 61 to 97 (LTTKGKATVAFAREARTEVRKVIWPTRQETLHTTLIV) the chain is Cytoplasmic. The chain crosses the membrane as a helical span at residues 98-115 (AAVTAVMSLILWGLDGIL). Residues 116-127 (VRLVSFITGLRF) are Periplasmic-facing.

Belongs to the SecE/SEC61-gamma family. As to quaternary structure, component of the Sec protein translocase complex. Heterotrimer consisting of SecY, SecE and SecG subunits. The heterotrimers can form oligomers, although 1 heterotrimer is thought to be able to translocate proteins. Interacts with the ribosome. Interacts with SecDF, and other proteins may be involved. Interacts with SecA.

It is found in the cell inner membrane. Essential subunit of the Sec protein translocation channel SecYEG. Clamps together the 2 halves of SecY. May contact the channel plug during translocation. This is Protein translocase subunit SecE from Escherichia coli O157:H7.